Reading from the N-terminus, the 176-residue chain is dCTP deaminase (176 aa).

DCTP contacts are provided by residues 99-104 (RSTLAR) and aspartate 115. The Proton donor/acceptor role is filled by glutamate 125. Position 163 (glutamine 163) interacts with dCTP.

This sequence belongs to the dCTP deaminase family. As to quaternary structure, homotrimer.

The enzyme catalyses dCTP + H2O + H(+) = dUTP + NH4(+). It participates in pyrimidine metabolism; dUMP biosynthesis; dUMP from dCTP (dUTP route): step 1/2. Functionally, catalyzes the deamination of dCTP to dUTP. The sequence is that of dCTP deaminase from Pyrobaculum aerophilum (strain ATCC 51768 / DSM 7523 / JCM 9630 / CIP 104966 / NBRC 100827 / IM2).